A 331-amino-acid polypeptide reads, in one-letter code: Anthranilate phosphoribosyltransferase (331 aa).

Residues Gly-79, 82 to 83 (GD), Thr-87, 89 to 92 (NIST), 107 to 115 (KHGNYGATS), and Ala-119 contribute to the 5-phospho-alpha-D-ribose 1-diphosphate site. Gly-79 lines the anthranilate pocket. Ser-91 is a binding site for Mg(2+). Residue Asn-110 coordinates anthranilate. Arg-165 contributes to the anthranilate binding site. Mg(2+)-binding residues include Asp-223 and Glu-224.

Belongs to the anthranilate phosphoribosyltransferase family. Homodimer. It depends on Mg(2+) as a cofactor.

It carries out the reaction N-(5-phospho-beta-D-ribosyl)anthranilate + diphosphate = 5-phospho-alpha-D-ribose 1-diphosphate + anthranilate. Its pathway is amino-acid biosynthesis; L-tryptophan biosynthesis; L-tryptophan from chorismate: step 2/5. In terms of biological role, catalyzes the transfer of the phosphoribosyl group of 5-phosphorylribose-1-pyrophosphate (PRPP) to anthranilate to yield N-(5'-phosphoribosyl)-anthranilate (PRA). The protein is Anthranilate phosphoribosyltransferase of Phocaeicola vulgatus (strain ATCC 8482 / DSM 1447 / JCM 5826 / CCUG 4940 / NBRC 14291 / NCTC 11154) (Bacteroides vulgatus).